Consider the following 305-residue polypeptide: Phosphatidylglycerol--prolipoprotein diacylglyceryl transferase (305 aa).

3 helical membrane passes run 10–30 (FLISFTLFGLPIVVRWYGAII), 59–79 (LMLGLVLGIAGARIYYVAFEW), and 92–112 (LTTGGIAIHGAIIGALLSTVI). Position 140 (Arg140) interacts with a 1,2-diacyl-sn-glycero-3-phospho-(1'-sn-glycerol). A run of 2 helical transmembrane segments spans residues 182–202 (LFHPTFLYESVWNLVGVGILL) and 260–280 (IRVAQLVSMVAIVVCGVLIFL).

Belongs to the Lgt family.

The protein localises to the cell membrane. It catalyses the reaction L-cysteinyl-[prolipoprotein] + a 1,2-diacyl-sn-glycero-3-phospho-(1'-sn-glycerol) = an S-1,2-diacyl-sn-glyceryl-L-cysteinyl-[prolipoprotein] + sn-glycerol 1-phosphate + H(+). It participates in protein modification; lipoprotein biosynthesis (diacylglyceryl transfer). Its function is as follows. Catalyzes the transfer of the diacylglyceryl group from phosphatidylglycerol to the sulfhydryl group of the N-terminal cysteine of a prolipoprotein, the first step in the formation of mature lipoproteins. In Chloroflexus aggregans (strain MD-66 / DSM 9485), this protein is Phosphatidylglycerol--prolipoprotein diacylglyceryl transferase.